The following is a 133-amino-acid chain: uncharacterized protein (133 aa).

Residues 91–113 (LFATALISCIPSSFSALSFLATL) traverse the membrane as a helical segment.

It is found in the membrane. This is an uncharacterized protein from Saccharomyces cerevisiae (strain ATCC 204508 / S288c) (Baker's yeast).